The sequence spans 445 residues: tRNA-2-methylthio-N(6)-dimethylallyladenosine synthase (445 aa).

An MTTase N-terminal domain is found at 3 to 124 (KNLYIKTYGC…LPELISKIVR (122 aa)). 6 residues coordinate [4Fe-4S] cluster: Cys12, Cys48, Cys87, Cys162, Cys166, and Cys169. Residues 148–380 (YPQGASSFIS…QKELMDQQLA (233 aa)) form the Radical SAM core domain. Positions 383–445 (ESCVGSTIKV…SLNSLTGEIL (63 aa)) constitute a TRAM domain.

It belongs to the methylthiotransferase family. MiaB subfamily. As to quaternary structure, monomer. [4Fe-4S] cluster is required as a cofactor.

It is found in the cytoplasm. It carries out the reaction N(6)-dimethylallyladenosine(37) in tRNA + (sulfur carrier)-SH + AH2 + 2 S-adenosyl-L-methionine = 2-methylsulfanyl-N(6)-dimethylallyladenosine(37) in tRNA + (sulfur carrier)-H + 5'-deoxyadenosine + L-methionine + A + S-adenosyl-L-homocysteine + 2 H(+). Its function is as follows. Catalyzes the methylthiolation of N6-(dimethylallyl)adenosine (i(6)A), leading to the formation of 2-methylthio-N6-(dimethylallyl)adenosine (ms(2)i(6)A) at position 37 in tRNAs that read codons beginning with uridine. The chain is tRNA-2-methylthio-N(6)-dimethylallyladenosine synthase from Rickettsia akari (strain Hartford).